Reading from the N-terminus, the 87-residue chain is Large ribosomal subunit protein bL27 (87 aa).

Residues 1–24 are disordered; it reads MAHKKGTGSTRNGRDSRSQRLGVK.

This sequence belongs to the bacterial ribosomal protein bL27 family.

In Crocosphaera subtropica (strain ATCC 51142 / BH68) (Cyanothece sp. (strain ATCC 51142)), this protein is Large ribosomal subunit protein bL27.